A 364-amino-acid polypeptide reads, in one-letter code: MPHSYPALSAEQKKELSDIALRIVAPGKGILAADESVGSMAKRLSQIGVENTEENRRLYRQVLFSADDRVKKCIGGVIFFHETLYQKDDNGVPFVRTIQDKGIVVGIKVDKGVVPLAGTDGETTTQGLDGLSERCAQYKKDGADFAKWRCVLKISERTPSALAILENANVLARYASICQQNGIVPIVEPEILPDGDHDLKRCQYVTEKVLAAVYKALSDHHVYLEGTLLKPNMVTPGHACPIKYTPEEIAMATVTALRRTVPPAVPGVTFLSGGQSEEEASFNLNAINRCPLPRPWALTFSYGRALQASALNAWRGQRDNAGAATEEFIKRAEVNGLAAQGKYEGSGEDGGAAAQSLYIANHAY.

Y5 bears the Phosphotyrosine mark. Phosphoserine occurs at positions 36, 39, and 45. R56 contributes to the substrate binding site. The residue at position 111 (K111) is an N6-acetyllysine. Residue S132 is modified to Phosphoserine. K147 provides a ligand contact to substrate. The Proton acceptor role is filled by E188. The active-site Schiff-base intermediate with dihydroxyacetone-P is the K230.

This sequence belongs to the class I fructose-bisphosphate aldolase family. In terms of assembly, homotetramer. Interacts with ATP6V1E1. May interact with PLD2.

The enzyme catalyses beta-D-fructose 1,6-bisphosphate = D-glyceraldehyde 3-phosphate + dihydroxyacetone phosphate. It functions in the pathway carbohydrate degradation; glycolysis; D-glyceraldehyde 3-phosphate and glycerone phosphate from D-glucose: step 4/4. This Homo sapiens (Human) protein is Fructose-bisphosphate aldolase C (ALDOC).